Reading from the N-terminus, the 432-residue chain is Glutamine synthetase, chloroplastic (432 aa).

Positions 79-159 constitute a GS beta-grasp domain; it reads IIAEYIWIGG…VICDTYTPQG (81 aa). Residues 166–432 enclose the GS catalytic domain; that stretch reads KRHKAAQIFS…LAAQKLSLNV (267 aa).

The protein belongs to the glutamine synthetase family. As to quaternary structure, homooctamer.

The protein localises to the plastid. Its subcellular location is the chloroplast. The catalysed reaction is L-glutamate + NH4(+) + ATP = L-glutamine + ADP + phosphate + H(+). Its function is as follows. The light-modulated chloroplast enzyme, encoded by a nuclear gene and expressed primarily in leaves, is responsible for the reassimilation of the ammonia generated by photorespiration. The protein is Glutamine synthetase, chloroplastic (GLN2) of Daucus carota (Wild carrot).